Consider the following 326-residue polypeptide: Undecaprenyl-diphosphatase (326 aa).

A run of 9 helical transmembrane segments spans residues alanine 11–alanine 31, threonine 42–isoleucine 62, glycine 90–tryptophan 110, leucine 138–valine 158, phenylalanine 165–leucine 185, alanine 212–isoleucine 232, phenylalanine 242–leucine 262, isoleucine 272–tryptophan 292, and isoleucine 304–phenylalanine 324.

Belongs to the UppP family.

It is found in the cell inner membrane. It catalyses the reaction di-trans,octa-cis-undecaprenyl diphosphate + H2O = di-trans,octa-cis-undecaprenyl phosphate + phosphate + H(+). Functionally, catalyzes the dephosphorylation of undecaprenyl diphosphate (UPP). Confers resistance to bacitracin. This chain is Undecaprenyl-diphosphatase, found in Synechocystis sp. (strain ATCC 27184 / PCC 6803 / Kazusa).